The chain runs to 130 residues: Small ribosomal subunit protein uS8 (130 aa).

It belongs to the universal ribosomal protein uS8 family. Part of the 30S ribosomal subunit. Contacts proteins S5 and S12.

One of the primary rRNA binding proteins, it binds directly to 16S rRNA central domain where it helps coordinate assembly of the platform of the 30S subunit. This is Small ribosomal subunit protein uS8 from Pseudomonas fluorescens (strain Pf0-1).